The following is a 175-amino-acid chain: Endoribonuclease YbeY (175 aa).

Residues histidine 129, histidine 133, and histidine 139 each coordinate Zn(2+).

Belongs to the endoribonuclease YbeY family. Zn(2+) serves as cofactor.

The protein localises to the cytoplasm. Functionally, single strand-specific metallo-endoribonuclease involved in late-stage 70S ribosome quality control and in maturation of the 3' terminus of the 16S rRNA. The sequence is that of Endoribonuclease YbeY from Lactobacillus gasseri (strain ATCC 33323 / DSM 20243 / BCRC 14619 / CIP 102991 / JCM 1131 / KCTC 3163 / NCIMB 11718 / NCTC 13722 / AM63).